The chain runs to 152 residues: Ribosome maturation factor RimP (152 aa).

This sequence belongs to the RimP family.

It is found in the cytoplasm. Its function is as follows. Required for maturation of 30S ribosomal subunits. The polypeptide is Ribosome maturation factor RimP (Shigella boydii serotype 4 (strain Sb227)).